The chain runs to 416 residues: Glutamyl-tRNA reductase (416 aa).

Residues 49-52, S105, 110-112, and Q116 contribute to the substrate site; these read TCNR and EPQ. C50 serves as the catalytic Nucleophile. 185 to 190 contacts NADP(+); the sequence is GAGEMI.

The protein belongs to the glutamyl-tRNA reductase family. In terms of assembly, homodimer.

The enzyme catalyses (S)-4-amino-5-oxopentanoate + tRNA(Glu) + NADP(+) = L-glutamyl-tRNA(Glu) + NADPH + H(+). It functions in the pathway porphyrin-containing compound metabolism; protoporphyrin-IX biosynthesis; 5-aminolevulinate from L-glutamyl-tRNA(Glu): step 1/2. Its function is as follows. Catalyzes the NADPH-dependent reduction of glutamyl-tRNA(Glu) to glutamate 1-semialdehyde (GSA). The polypeptide is Glutamyl-tRNA reductase (Nitrosomonas europaea (strain ATCC 19718 / CIP 103999 / KCTC 2705 / NBRC 14298)).